Consider the following 101-residue polypeptide: Small ribosomal subunit protein uS14 (101 aa).

Belongs to the universal ribosomal protein uS14 family. As to quaternary structure, part of the 30S ribosomal subunit. Contacts proteins S3 and S10.

Its function is as follows. Binds 16S rRNA, required for the assembly of 30S particles and may also be responsible for determining the conformation of the 16S rRNA at the A site. The protein is Small ribosomal subunit protein uS14 of Caulobacter sp. (strain K31).